The primary structure comprises 262 residues: Glutamate 5-kinase (262 aa).

Lysine 14 provides a ligand contact to ATP. Positions 54, 141, and 153 each coordinate substrate. ATP is bound by residues 173–174 (SD) and 214–220 (TGGMVTK).

It belongs to the glutamate 5-kinase family.

The protein localises to the cytoplasm. The enzyme catalyses L-glutamate + ATP = L-glutamyl 5-phosphate + ADP. Its pathway is amino-acid biosynthesis; L-proline biosynthesis; L-glutamate 5-semialdehyde from L-glutamate: step 1/2. In terms of biological role, catalyzes the transfer of a phosphate group to glutamate to form L-glutamate 5-phosphate. This Symbiobacterium thermophilum (strain DSM 24528 / JCM 14929 / IAM 14863 / T) protein is Glutamate 5-kinase.